We begin with the raw amino-acid sequence, 290 residues long: Ribosomal RNA small subunit methyltransferase A (290 aa).

Residues Asn27, Leu29, Gly54, Glu75, Asp100, and Asn125 each contribute to the S-adenosyl-L-methionine site.

Belongs to the class I-like SAM-binding methyltransferase superfamily. rRNA adenine N(6)-methyltransferase family. RsmA subfamily.

Its subcellular location is the cytoplasm. The enzyme catalyses adenosine(1518)/adenosine(1519) in 16S rRNA + 4 S-adenosyl-L-methionine = N(6)-dimethyladenosine(1518)/N(6)-dimethyladenosine(1519) in 16S rRNA + 4 S-adenosyl-L-homocysteine + 4 H(+). Its function is as follows. Specifically dimethylates two adjacent adenosines (A1518 and A1519) in the loop of a conserved hairpin near the 3'-end of 16S rRNA in the 30S particle. May play a critical role in biogenesis of 30S subunits. This is Ribosomal RNA small subunit methyltransferase A from Streptococcus pneumoniae (strain 70585).